The primary structure comprises 442 residues: Lysosomal dipeptide transporter MFSD1 (442 aa).

A Dileucine internalization motif motif is present at residues 8 to 9; that stretch reads LL. Transmembrane regions (helical) follow at residues 38 to 58, 85 to 105, 107 to 127, 187 to 207, 238 to 258, 276 to 296, 303 to 323, 333 to 353, 364 to 384, and 390 to 410; these read LLVLALMCFLGFGSCFCYDNP, TVIFSIFVCVGQVIFALGALV, AFWLMEVGRFIFGIGGESLAV, LLIGGITCLFSLACALILAYL, LWLIFVICVCYYAAVFPFIGL, AINSVVYIISAPMSPVFGILV, IIWVLCAVITTLASHIMLAFT, LLGVAYSLLACALWPMVAFVV, FMQSIQNLGLAVIAIAAGMIL, and LFLEVFFSACVSLSLVAVVML.

It belongs to the major facilitator superfamily. In terms of assembly, homodimer. Interacts with lysosomal protein GLMP (via lumenal domain); the interaction starts while both proteins are still in the endoplasmic reticulum and is required for stabilization of MFSD1 in lysosomes but has no direct effect on its targeting to lysosomes or transporter activity.

Its subcellular location is the lysosome membrane. It carries out the reaction L-alpha-aminoacyl-L-arginine(out) = L-alpha-aminoacyl-L-arginine(in). It catalyses the reaction L-arginyl-L-alpha-amino acid(out) = L-arginyl-L-alpha-amino acid(in). The catalysed reaction is L-arginyl-glycine(out) = L-arginyl-glycine(in). The enzyme catalyses L-alpha-aminoacyl-L-lysine(out) = L-alpha-aminoacyl-L-lysine(in). It carries out the reaction L-aspartyl-L-lysine(out) = L-aspartyl-L-lysine(in). It catalyses the reaction L-alanyl-L-lysine(out) = L-alanyl-L-lysine(in). The catalysed reaction is L-lysyl-L-alpha-amino acid(out) = L-lysyl-L-alpha-amino acid(in). The enzyme catalyses L-lysyl-L-alanine(out) = L-lysyl-L-alanine(in). It carries out the reaction L-lysyl-L-lysine(out) = L-lysyl-L-lysine(in). It catalyses the reaction L-lysyl-glycine(out) = L-lysyl-glycine(in). The catalysed reaction is L-alpha-aminoacyl-L-histidine(out) = L-alpha-aminoacyl-L-histidine(in). The enzyme catalyses L-histidyl-L-alpha-amino acid(out) = L-histidyl-L-alpha-amino acid(in). It carries out the reaction L-histidyl-glycine(out) = L-histidyl-glycine(in). Its function is as follows. Lysosomal dipeptide uniporter that selectively exports lysine, arginine or histidine-containing dipeptides with a net positive charge from the lysosome lumen into the cytosol. Could play a role in a specific type of protein O-glycosylation indirectly regulating macrophages migration and tissue invasion. Also essential for liver homeostasis. This is Lysosomal dipeptide transporter MFSD1 from Gallus gallus (Chicken).